We begin with the raw amino-acid sequence, 217 residues long: PTB-containing, cubilin and LRP1-interacting protein (217 aa).

In terms of domain architecture, PID spans 60–217 (VTYLGKVSTT…ASQELESDDG (158 aa)). Residues 194 to 217 (KSDGRIHRSSSSEEASQELESDDG) form a disordered region. A phosphoserine mark is found at serine 202, serine 203, and serine 214. The span at 208 to 217 (ASQELESDDG) shows a compositional bias: acidic residues.

As to quaternary structure, found in a complex with PID1/PCLI1, LRP1 and CUBNI. Interacts with LRP1 and CUBN.

The protein resides in the cytoplasm. Functionally, increases proliferation of preadipocytes without affecting adipocytic differentiation. This is PTB-containing, cubilin and LRP1-interacting protein (Pid1) from Mus musculus (Mouse).